Consider the following 246-residue polypeptide: Probable septum site-determining protein MinC (246 aa).

The tract at residues 116–140 is disordered; sequence AAVSPPPPPPARAEPAPPAARPAPG. Over residues 119–136 the composition is skewed to pro residues; sequence SPPPPPPARAEPAPPAAR.

It belongs to the MinC family. In terms of assembly, interacts with MinD and FtsZ.

In terms of biological role, cell division inhibitor that blocks the formation of polar Z ring septums. Rapidly oscillates between the poles of the cell to destabilize FtsZ filaments that have formed before they mature into polar Z rings. Prevents FtsZ polymerization. The sequence is that of Probable septum site-determining protein MinC from Xanthomonas oryzae pv. oryzae (strain MAFF 311018).